The sequence spans 90 residues: DNA-directed RNA polymerase subunit omega (90 aa).

This sequence belongs to the RNA polymerase subunit omega family. As to quaternary structure, the RNAP catalytic core consists of 2 alpha, 1 beta, 1 beta' and 1 omega subunit. When a sigma factor is associated with the core the holoenzyme is formed, which can initiate transcription.

The catalysed reaction is RNA(n) + a ribonucleoside 5'-triphosphate = RNA(n+1) + diphosphate. Promotes RNA polymerase assembly. Latches the N- and C-terminal regions of the beta' subunit thereby facilitating its interaction with the beta and alpha subunits. The sequence is that of DNA-directed RNA polymerase subunit omega from Streptomyces griseus subsp. griseus (strain JCM 4626 / CBS 651.72 / NBRC 13350 / KCC S-0626 / ISP 5235).